We begin with the raw amino-acid sequence, 473 residues long: Pup--protein ligase (473 aa).

E9 is a Mg(2+) binding site. R54 contacts ATP. Residue Y56 coordinates Mg(2+). Residue D58 is the Proton acceptor of the active site. Mg(2+) is bound at residue E64. ATP-binding residues include T67 and W425.

This sequence belongs to the Pup ligase/Pup deamidase family. Pup-conjugating enzyme subfamily.

It catalyses the reaction ATP + [prokaryotic ubiquitin-like protein]-L-glutamate + [protein]-L-lysine = ADP + phosphate + N(6)-([prokaryotic ubiquitin-like protein]-gamma-L-glutamyl)-[protein]-L-lysine.. The protein operates within protein degradation; proteasomal Pup-dependent pathway. It participates in protein modification; protein pupylation. Its function is as follows. Catalyzes the covalent attachment of the prokaryotic ubiquitin-like protein modifier Pup to the proteasomal substrate proteins, thereby targeting them for proteasomal degradation. This tagging system is termed pupylation. The ligation reaction involves the side-chain carboxylate of the C-terminal glutamate of Pup and the side-chain amino group of a substrate lysine. The chain is Pup--protein ligase from Brachybacterium faecium (strain ATCC 43885 / DSM 4810 / JCM 11609 / LMG 19847 / NBRC 14762 / NCIMB 9860 / 6-10).